Consider the following 445-residue polypeptide: ATP-dependent protease ATPase subunit HslU (445 aa).

Residues Val18, 60–65 (GVGKTE), Asp254, Glu319, and Arg391 contribute to the ATP site.

This sequence belongs to the ClpX chaperone family. HslU subfamily. In terms of assembly, a double ring-shaped homohexamer of HslV is capped on each side by a ring-shaped HslU homohexamer. The assembly of the HslU/HslV complex is dependent on binding of ATP.

The protein localises to the cytoplasm. Functionally, ATPase subunit of a proteasome-like degradation complex; this subunit has chaperone activity. The binding of ATP and its subsequent hydrolysis by HslU are essential for unfolding of protein substrates subsequently hydrolyzed by HslV. HslU recognizes the N-terminal part of its protein substrates and unfolds these before they are guided to HslV for hydrolysis. This Alcanivorax borkumensis (strain ATCC 700651 / DSM 11573 / NCIMB 13689 / SK2) protein is ATP-dependent protease ATPase subunit HslU.